We begin with the raw amino-acid sequence, 907 residues long: Collagen alpha-2(I) chain (907 aa).

2 disordered regions span residues 1-183 (GPMG…GIPG) and 199-907 (IPGP…PGPS). Over residues 19–33 (AGEDGHPGKPGRERG) the composition is skewed to basic and acidic residues. Low complexity-rich tracts occupy residues 101 to 130 (VGAPGPAGARGSDGSVGPVGPAGPIGSAGP), 155 to 169 (AGPRGEVGIPGVSGP), and 206 to 221 (PGPVGAAGATGARGIV). Deamidated asparagine is present on Asn260. Pro272 is subject to 4-hydroxyproline. 8 stretches are compositionally biased toward low complexity: residues 272–281 (PGIRGSRGIP), 292–307 (PPGSRGASGPAGVRGP), 340–362 (PAGIPGIDGRPGPAGPAGARGEP), 424–441 (PGESGAAGPAGPIGSRGP), 453–475 (EPGVVGAPGTAGPSGPSGIPGER), 495–507 (APGAVGAPGPAGA), 535–555 (VGPAGPNGFAGPAGAAGQPGA), and 566–581 (NGPVGPTGPVGSAGPA). The span at 591–600 (GSRGDGGPPG) shows a compositional bias: gly residues. Low complexity-rich tracts occupy residues 601–611 (ATGFPGAAGRT), 664–691 (EAGTAGAPGIPGPQGIIGAPGIIGIPGS), 706–745 (EPGPIGIAGPPGARGPPGAVGSPGVNGAPGEAGRDGNPGN), 756–766 (NSGPVGAAGAP), and 783–804 (EPGPVGSVGPAGAVGPRGPSGP). Positions 808–819 (RGDKGEPGDKGP) are enriched in basic and acidic residues. Over residues 892–907 (AGPPGPPGPPGPPGPS) the composition is skewed to pro residues.

Belongs to the fibrillar collagen family. Trimers of one alpha 2(I) and two alpha 1(I) chains. Interacts (via C-terminus) with TMEM131 (via PapD-L domain); the interaction is direct and is involved in assembly and TRAPPIII ER-to-Golgi transport complex-dependent secretion of collagen. Prolines at the third position of the tripeptide repeating unit (G-X-Y) are hydroxylated in some or all of the chains. Forms the fibrils of tendon, ligaments and bones. In bones, the fibrils are mineralized with calcium hydroxyapatite.

The protein localises to the secreted. It is found in the extracellular space. Its subcellular location is the extracellular matrix. Type I collagen is a member of group I collagen (fibrillar forming collagen). The chain is Collagen alpha-2(I) chain from Macrauchenia sp.